The following is an 800-amino-acid chain: Receptor like protein 26 (800 aa).

Residues M1–S19 form the signal peptide. The Extracellular portion of the chain corresponds to F20–K733. 6 N-linked (GlcNAc...) asparagine glycosylation sites follow: N49, N61, N83, N96, N101, and N113. LRR repeat units follow at residues L89–N113, T115–L138, I139–L161, T162–T185, P187–S212, L214–L235, I236–P259, L260–D281, P285–T307, L308–L332, R334–N357, and S358–S381. Residues N145 and N160 are each glycosylated (N-linked (GlcNAc...) asparagine). N207 carries an N-linked (GlcNAc...) asparagine glycan. N247 is a glycosylation site (N-linked (GlcNAc...) asparagine). N342 and N357 each carry an N-linked (GlcNAc...) asparagine glycan. The stretch at I382–N401 is one LRR 13; degenerate repeat. 2 N-linked (GlcNAc...) asparagine glycosylation sites follow: N388 and N401. LRR repeat units lie at residues R402–L423, S424–S446, A448–C471, S472–A494, L495–P519, F522–N546, L591–L615, K616–V639, T640–L663, and F665–G688. N470 carries N-linked (GlcNAc...) asparagine glycosylation. N622 and N638 each carry an N-linked (GlcNAc...) asparagine glycan. A helical transmembrane segment spans residues A734–A754. Over S755–I800 the chain is Cytoplasmic.

It belongs to the RLP family.

The protein localises to the cell membrane. The polypeptide is Receptor like protein 26 (Arabidopsis thaliana (Mouse-ear cress)).